The following is a 196-amino-acid chain: ATP-dependent Clp protease proteolytic subunit (196 aa).

The Nucleophile role is filled by Ser-101. His-126 is an active-site residue.

The protein belongs to the peptidase S14 family. In terms of assembly, component of the chloroplastic Clp protease core complex.

The protein localises to the plastid. It localises to the chloroplast stroma. It catalyses the reaction Hydrolysis of proteins to small peptides in the presence of ATP and magnesium. alpha-casein is the usual test substrate. In the absence of ATP, only oligopeptides shorter than five residues are hydrolyzed (such as succinyl-Leu-Tyr-|-NHMec, and Leu-Tyr-Leu-|-Tyr-Trp, in which cleavage of the -Tyr-|-Leu- and -Tyr-|-Trp bonds also occurs).. Cleaves peptides in various proteins in a process that requires ATP hydrolysis. Has a chymotrypsin-like activity. Plays a major role in the degradation of misfolded proteins. In Nicotiana tabacum (Common tobacco), this protein is ATP-dependent Clp protease proteolytic subunit.